The primary structure comprises 443 residues: ATP-dependent protease ATPase subunit HslU (443 aa).

ATP contacts are provided by residues Ile-18, 60 to 65 (GVGKTE), Asp-256, Glu-321, and Arg-393.

This sequence belongs to the ClpX chaperone family. HslU subfamily. A double ring-shaped homohexamer of HslV is capped on each side by a ring-shaped HslU homohexamer. The assembly of the HslU/HslV complex is dependent on binding of ATP.

It localises to the cytoplasm. ATPase subunit of a proteasome-like degradation complex; this subunit has chaperone activity. The binding of ATP and its subsequent hydrolysis by HslU are essential for unfolding of protein substrates subsequently hydrolyzed by HslV. HslU recognizes the N-terminal part of its protein substrates and unfolds these before they are guided to HslV for hydrolysis. The sequence is that of ATP-dependent protease ATPase subunit HslU from Citrobacter koseri (strain ATCC BAA-895 / CDC 4225-83 / SGSC4696).